We begin with the raw amino-acid sequence, 357 residues long: DNA polymerase IV (357 aa).

Residues 4-185 (IIHCDCDCFY…LPVERLFGVG (182 aa)) enclose the UmuC domain. 2 residues coordinate Mg(2+): aspartate 8 and aspartate 103. Glutamate 104 is an active-site residue.

The protein belongs to the DNA polymerase type-Y family. As to quaternary structure, monomer. Mg(2+) is required as a cofactor.

The protein localises to the cytoplasm. The enzyme catalyses DNA(n) + a 2'-deoxyribonucleoside 5'-triphosphate = DNA(n+1) + diphosphate. Its function is as follows. Poorly processive, error-prone DNA polymerase involved in untargeted mutagenesis. Copies undamaged DNA at stalled replication forks, which arise in vivo from mismatched or misaligned primer ends. These misaligned primers can be extended by PolIV. Exhibits no 3'-5' exonuclease (proofreading) activity. May be involved in translesional synthesis, in conjunction with the beta clamp from PolIII. This chain is DNA polymerase IV, found in Ralstonia nicotianae (strain ATCC BAA-1114 / GMI1000) (Ralstonia solanacearum).